Reading from the N-terminus, the 384-residue chain is GTPase Obg (384 aa).

The Obg domain maps to 1 to 159 (MKFIDEAKIE…RSLQLELKVL (159 aa)). Residues 20 to 46 (ATSFRREKFVPRGGPDGGDGGKGGSVW) form a disordered region. The segment covering 33–43 (GPDGGDGGKGG) has biased composition (gly residues). In terms of domain architecture, OBG-type G spans 160-348 (ADVGLLGMPN…LVHQINQYLT (189 aa)). GTP is bound by residues 166-173 (GMPNAGKS), 191-195 (FTTLH), 213-216 (DIPG), 284-287 (NKLD), and 329-331 (SAL). Residues serine 173 and threonine 193 each coordinate Mg(2+).

Belongs to the TRAFAC class OBG-HflX-like GTPase superfamily. OBG GTPase family. Monomer. Mg(2+) serves as cofactor.

The protein localises to the cytoplasm. In terms of biological role, an essential GTPase which binds GTP, GDP and possibly (p)ppGpp with moderate affinity, with high nucleotide exchange rates and a fairly low GTP hydrolysis rate. Plays a role in control of the cell cycle, stress response, ribosome biogenesis and in those bacteria that undergo differentiation, in morphogenesis control. This Neisseria meningitidis serogroup C (strain 053442) protein is GTPase Obg.